The primary structure comprises 264 residues: MLGVLLCWCLGASVLLYVLYSWLIPAAVQFNGSLALLWHDVIVERALDSLTRSTRPQRLLKAVKQHATRGDPQSVISAIDHFCRHREWAMNVGDEKGCILDSVVSELNPEKVLELGTYCGYSTVRIARLLPPGARLITLEFNPDYAVIARQVIAWAGIEDKVQLVEGASEDWIPRMKEHFGIETFDLVFLDHWKDHYLPDTKLMEGCGLLRKGTVLLADNVICPGVPDYLEYVRNSRSYKSCYFKSHLEYTRAEDGLEKSVFLG.

The N-terminal stretch at 1-29 (MLGVLLCWCLGASVLLYVLYSWLIPAAVQ) is a signal peptide. N31 is a glycosylation site (N-linked (GlcNAc...) asparagine). 4 residues coordinate S-adenosyl-L-methionine: V92, S122, E140, and D191. D191 contributes to the Mg(2+) binding site. A substrate-binding site is contributed by K194. Mg(2+)-binding residues include D219 and N220. Substrate contacts are provided by N220 and E249.

This sequence belongs to the class I-like SAM-binding methyltransferase superfamily. Cation-dependent O-methyltransferase family. The cofactor is Mg(2+). Strongly expressed in eye, diencephalon, spinal cord, hindbrain, liver, kidney and telencephalon. Also detected at very low levels in muscle, spleen, anterior gut and heart. In eye, expressed strongly in retina. In brain, expressed in the central part of the telencephalon, the periventricular gray zone of the optic tectum, the periglomerular nucleus, the olfactory bulb, and the region adjacent to the diencephalic ventricle in the hypothalamus. Expressed in gill, with strongest expression in gill filaments nearest the gill arch, and in esophageal epithelium.

It localises to the secreted. It catalyses the reaction a catechol + S-adenosyl-L-methionine = a guaiacol + S-adenosyl-L-homocysteine + H(+). Functionally, catalyzes the O-methylation, and thereby the inactivation, of catecholamine neurotransmitters and catechol hormones. In Danio rerio (Zebrafish), this protein is Catechol O-methyltransferase B.